The chain runs to 316 residues: MNNSTALQTLDAILEIYARPFNDLIYAAQQVHRLHFDPNAIQCSTLLSIKTGGCPEDCGYCSQSVHHQTALQAEPLMDLEQVRAAAREAKANGAQRLCMGAAWRSPHDRDIEKVAAMIGVVKEYGLESCVTLGMLKPGQAERLQHAGLDYYNHNLDTSPEFYGEVIHTRSYQDRLDTLEAVRDAGIRICSGGILGMGESRRDRARMLQVLAQLPQAPESIPINALVPIPGTPLEAAEPIDGFEFVRTVAVTRILFPKAYVRLSAGREAMSDELQALAFLAGANSIFLGDRLLTTGNASTGHDQALFNRLGLHRSAD.

Residues 39 to 263 enclose the Radical SAM core domain; it reads NAIQCSTLLS…LFPKAYVRLS (225 aa). [4Fe-4S] cluster-binding residues include Cys-54, Cys-58, and Cys-61. Cys-98, Cys-129, Cys-189, and Arg-261 together coordinate [2Fe-2S] cluster.

The protein belongs to the radical SAM superfamily. Biotin synthase family. As to quaternary structure, homodimer. Requires [4Fe-4S] cluster as cofactor. The cofactor is [2Fe-2S] cluster.

It carries out the reaction (4R,5S)-dethiobiotin + (sulfur carrier)-SH + 2 reduced [2Fe-2S]-[ferredoxin] + 2 S-adenosyl-L-methionine = (sulfur carrier)-H + biotin + 2 5'-deoxyadenosine + 2 L-methionine + 2 oxidized [2Fe-2S]-[ferredoxin]. It participates in cofactor biosynthesis; biotin biosynthesis; biotin from 7,8-diaminononanoate: step 2/2. Functionally, catalyzes the conversion of dethiobiotin (DTB) to biotin by the insertion of a sulfur atom into dethiobiotin via a radical-based mechanism. This Acidithiobacillus ferrooxidans (strain ATCC 23270 / DSM 14882 / CIP 104768 / NCIMB 8455) (Ferrobacillus ferrooxidans (strain ATCC 23270)) protein is Biotin synthase.